A 63-amino-acid polypeptide reads, in one-letter code: uncharacterized protein (63 aa).

Residues leucine 4 to isoleucine 24 traverse the membrane as a helical segment.

It is found in the membrane. This is an uncharacterized protein from Invertebrate iridescent virus 6 (IIV-6).